The primary structure comprises 113 residues: uncharacterized protein (113 aa).

This sequence to H.pylori HP0245/JHP0230.

This is an uncharacterized protein from Campylobacter jejuni subsp. jejuni serotype O:2 (strain ATCC 700819 / NCTC 11168).